We begin with the raw amino-acid sequence, 238 residues long: Ribitol-5-phosphate cytidylyltransferase 2 (238 aa).

CTP-binding positions include 7-10 (LAGG) and 81-87 (GTDRNET).

The protein belongs to the IspD/TarI cytidylyltransferase family. TarI subfamily. Heterodimer together with TarJ.

The catalysed reaction is D-ribitol 5-phosphate + CTP + H(+) = CDP-L-ribitol + diphosphate. It participates in cell wall biogenesis; poly(ribitol phosphate) teichoic acid biosynthesis. Functionally, catalyzes the transfer of the cytidylyl group of CTP to D-ribitol 5-phosphate. This is Ribitol-5-phosphate cytidylyltransferase 2 from Staphylococcus aureus (strain NCTC 8325 / PS 47).